The sequence spans 70 residues: Beta-defensin 131B (70 aa).

Residues 1 to 22 form the signal peptide; it reads MRVLFFVFGVLSLMSTVPPTRS. Disulfide bonds link Cys-29–Cys-56, Cys-36–Cys-50, and Cys-40–Cys-57.

The protein belongs to the beta-defensin family.

Its subcellular location is the secreted. Functionally, has antibacterial activity. This Homo sapiens (Human) protein is Beta-defensin 131B.